The primary structure comprises 103 residues: MAAKLKKGDKVIVLAGKDKGKTGSISSVDPKSGKAIVDGINIAIRATRQSQTEQGGRIPKAMPIDLSNLAYVDANGKATRVGFKMEGDKKVRFAKTTGDVIDA.

Belongs to the universal ribosomal protein uL24 family. Part of the 50S ribosomal subunit.

In terms of biological role, one of two assembly initiator proteins, it binds directly to the 5'-end of the 23S rRNA, where it nucleates assembly of the 50S subunit. One of the proteins that surrounds the polypeptide exit tunnel on the outside of the subunit. The protein is Large ribosomal subunit protein uL24 of Roseobacter denitrificans (strain ATCC 33942 / OCh 114) (Erythrobacter sp. (strain OCh 114)).